We begin with the raw amino-acid sequence, 142 residues long: Large ribosomal subunit protein uL13 (142 aa).

Belongs to the universal ribosomal protein uL13 family. In terms of assembly, part of the 50S ribosomal subunit.

This protein is one of the early assembly proteins of the 50S ribosomal subunit, although it is not seen to bind rRNA by itself. It is important during the early stages of 50S assembly. This Hamiltonella defensa subsp. Acyrthosiphon pisum (strain 5AT) protein is Large ribosomal subunit protein uL13.